Here is a 533-residue protein sequence, read N- to C-terminus: Probable protein kinase UbiB (533 aa).

Residues 24–44 (LILELPMLPWWLRLLGAALPW) form a helical membrane-spanning segment. The Protein kinase domain maps to 126-494 (RFEREPLASA…WKSSRHDWLG (369 aa)). Residues 132–140 (LASASVAQV) and K154 contribute to the ATP site. The active-site Proton acceptor is D289. A helical membrane pass occupies residues 510–530 (LGQQLEAWPAWVMLAGGVFLI).

The protein belongs to the ABC1 family. UbiB subfamily.

It is found in the cell inner membrane. It participates in cofactor biosynthesis; ubiquinone biosynthesis [regulation]. In terms of biological role, is probably a protein kinase regulator of UbiI activity which is involved in aerobic coenzyme Q (ubiquinone) biosynthesis. This is Probable protein kinase UbiB from Pseudomonas paraeruginosa (strain DSM 24068 / PA7) (Pseudomonas aeruginosa (strain PA7)).